We begin with the raw amino-acid sequence, 324 residues long: MVKPKVGINGFGRIGRLALRAAVEKDTVQVVAINDPFIELDYMVYMFNYDSTHGRFNGKISTSAGNLVVEKEGKATHTIKVFNLKDPAEIKWAEVGAEYVIESTGVFTTIEKASAHLKGGAKKVVISAPSADAPMYVMGVNEDKYDPAKDNVISNASCTTNCLAPLAKVINDEFGIIEGLMTTVHAVTATQKTVDGPNGKQWRDGRGAAQNIIPASTGAAKAVGKVIPELNGKLTGMAFRVPTPNVSVVDLTARLEKPASLDAIKAAVKKAAEGNLKGILGYTEDQVVSTDFLGDSRSSIFDAGACISLNPHFVKLVSWYDNEF.

NAD(+) is bound by residues 13–14, aspartate 35, and lysine 85; that span reads RI. D-glyceraldehyde 3-phosphate contacts are provided by residues 157 to 159, threonine 188, 217 to 218, and arginine 240; these read SCT and TG. The active-site Nucleophile is cysteine 158. NAD(+) is bound at residue asparagine 322.

It belongs to the glyceraldehyde-3-phosphate dehydrogenase family. As to quaternary structure, homotetramer.

Its subcellular location is the cytoplasm. The enzyme catalyses D-glyceraldehyde 3-phosphate + phosphate + NAD(+) = (2R)-3-phospho-glyceroyl phosphate + NADH + H(+). Its pathway is carbohydrate degradation; glycolysis; pyruvate from D-glyceraldehyde 3-phosphate: step 1/5. This chain is Glyceraldehyde-3-phosphate dehydrogenase 1 (GPD-1), found in Globodera rostochiensis (Golden nematode worm).